The primary structure comprises 476 residues: Aspartyl/glutamyl-tRNA(Asn/Gln) amidotransferase subunit B (476 aa).

It belongs to the GatB/GatE family. GatB subfamily. Heterotrimer of A, B and C subunits.

It catalyses the reaction L-glutamyl-tRNA(Gln) + L-glutamine + ATP + H2O = L-glutaminyl-tRNA(Gln) + L-glutamate + ADP + phosphate + H(+). The enzyme catalyses L-aspartyl-tRNA(Asn) + L-glutamine + ATP + H2O = L-asparaginyl-tRNA(Asn) + L-glutamate + ADP + phosphate + 2 H(+). Its function is as follows. Allows the formation of correctly charged Asn-tRNA(Asn) or Gln-tRNA(Gln) through the transamidation of misacylated Asp-tRNA(Asn) or Glu-tRNA(Gln) in organisms which lack either or both of asparaginyl-tRNA or glutaminyl-tRNA synthetases. The reaction takes place in the presence of glutamine and ATP through an activated phospho-Asp-tRNA(Asn) or phospho-Glu-tRNA(Gln). This chain is Aspartyl/glutamyl-tRNA(Asn/Gln) amidotransferase subunit B, found in Variovorax paradoxus (strain S110).